The sequence spans 438 residues: MLDIQLLRKDIDAVAARLKDRGYVLDVAGFAALEAERKAIQTRTEELQARRNSLSKQIGVLKGKGEDASGVMAEVSGIGDELKASAAQLDVVQAKLQDLMLSIPNLPHESVPAGRDETQNVEVRREGTPRTFDFPVKDHVDLGAALGLDFDAGAKLSGARFTVLKGQVARLHRALAQFMLDTHTLEHGYTEAYVPYIVNAASMRGTGQLPKFEEDLFRVPRKMGHSAEEGDGERVENFYLIPTAEVPLTNLVRDEIVAADTLPMMFAAHSPCFRSEAGSYGKDTRGMIRQHQFDKVEMVQIVQPETSAAALEAMTNCAENILRKLELPFRTVVLCTGDMGFGSTKTYDIEVWIPAQNTYREISSCSNMGDFQARRMQARFRNAQGKPELVHTLNGSGLAVGRTLVALLENYQNADGSVTVPTALRPYLGGQEVLKPAV.

An L-serine-binding site is contributed by 243–245; that stretch reads TAE. 274–276 is an ATP binding site; that stretch reads RSE. E297 is an L-serine binding site. 361–364 provides a ligand contact to ATP; the sequence is EISS. An L-serine-binding site is contributed by S396.

Belongs to the class-II aminoacyl-tRNA synthetase family. Type-1 seryl-tRNA synthetase subfamily. Homodimer. The tRNA molecule binds across the dimer.

It localises to the cytoplasm. The enzyme catalyses tRNA(Ser) + L-serine + ATP = L-seryl-tRNA(Ser) + AMP + diphosphate + H(+). It catalyses the reaction tRNA(Sec) + L-serine + ATP = L-seryl-tRNA(Sec) + AMP + diphosphate + H(+). It participates in aminoacyl-tRNA biosynthesis; selenocysteinyl-tRNA(Sec) biosynthesis; L-seryl-tRNA(Sec) from L-serine and tRNA(Sec): step 1/1. Catalyzes the attachment of serine to tRNA(Ser). Is also able to aminoacylate tRNA(Sec) with serine, to form the misacylated tRNA L-seryl-tRNA(Sec), which will be further converted into selenocysteinyl-tRNA(Sec). This is Serine--tRNA ligase from Ralstonia pickettii (strain 12J).